The primary structure comprises 237 residues: MRVAVLSGAGISAESGVPTFRDDKNGLWARFDPYELSSTQGWLRNPERVWGWYLWRHYLVANVEPNDGHRAIAAWQDHAEVSVITQNVDDLHERAGSGAVHHLHGSLFEFRCARCGVPYTDALPEMPEPAIEVEPPVCDCGGLIRPDIVWFGEPLPEEPWRSAVEATGSADVMVVVGTSAIVYPAAGLPDLALARGTAVIEVNPEPTPLSGSATISIRESASQALPGLLERLPALLK.

The Deacetylase sirtuin-type domain occupies 1-235; sequence MRVAVLSGAG…PGLLERLPAL (235 aa). Position 8 to 28 (8 to 28) interacts with NAD(+); it reads GAGISAESGVPTFRDDKNGLW. Substrate contacts are provided by Tyr53 and Arg56. Position 86-89 (86-89) interacts with NAD(+); the sequence is QNVD. His104 (proton acceptor) is an active-site residue. Residues Cys112, Cys115, Cys138, and Cys140 each contribute to the Zn(2+) site. Residues 177–179, 203–205, and Ala221 contribute to the NAD(+) site; these read GTS and NPE.

Belongs to the sirtuin family. Class III subfamily. Requires Zn(2+) as cofactor.

The protein resides in the cytoplasm. The catalysed reaction is N(6)-acetyl-L-lysyl-[protein] + NAD(+) + H2O = 2''-O-acetyl-ADP-D-ribose + nicotinamide + L-lysyl-[protein]. It carries out the reaction N(6)-succinyl-L-lysyl-[protein] + NAD(+) + H2O = 2''-O-succinyl-ADP-D-ribose + nicotinamide + L-lysyl-[protein]. Functionally, NAD-dependent lysine deacetylase and desuccinylase that specifically removes acetyl and succinyl groups on target proteins. Modulates the activities of several proteins which are inactive in their acylated form. This chain is NAD-dependent protein deacylase, found in Mycobacterium bovis (strain ATCC BAA-935 / AF2122/97).